The sequence spans 466 residues: Cysteine--tRNA ligase (466 aa).

Residue C27 participates in Zn(2+) binding. The short motif at 29–39 is the 'HIGH' region element; it reads PTVYNFFHIGN. The Zn(2+) site is built by C207, H232, and E236. The 'KMSKS' region signature appears at 264–268; the sequence is KMSKS. K267 contacts ATP.

It belongs to the class-I aminoacyl-tRNA synthetase family. Monomer. Zn(2+) is required as a cofactor.

Its subcellular location is the cytoplasm. It catalyses the reaction tRNA(Cys) + L-cysteine + ATP = L-cysteinyl-tRNA(Cys) + AMP + diphosphate. In Clostridium beijerinckii (strain ATCC 51743 / NCIMB 8052) (Clostridium acetobutylicum), this protein is Cysteine--tRNA ligase.